The chain runs to 318 residues: Putative S-adenosyl-L-methionine-dependent methyltransferase MMAR_1595 (318 aa).

S-adenosyl-L-methionine contacts are provided by residues E132 and 161–162 (DL).

This sequence belongs to the UPF0677 family.

In terms of biological role, exhibits S-adenosyl-L-methionine-dependent methyltransferase activity. This chain is Putative S-adenosyl-L-methionine-dependent methyltransferase MMAR_1595, found in Mycobacterium marinum (strain ATCC BAA-535 / M).